A 490-amino-acid polypeptide reads, in one-letter code: Angiopoietin-related protein 1 (490 aa).

The signal sequence occupies residues 1–22 (MKAFVWTLSVLLFLLGSGHCKG). A coiled-coil region spans residues 79-167 (ITRMDLENLK…LNVTTEMLKM (89 aa)). 2 N-linked (GlcNAc...) asparagine glycosylation sites follow: Asn-159 and Asn-187. One can recognise a Fibrinogen C-terminal domain in the interval 270-490 (FINEGPFKDC…AVQMMIKPID (221 aa)). 2 disulfides stabilise this stretch: Cys-279/Cys-308 and Cys-431/Cys-444.

The protein localises to the secreted. This Mus musculus (Mouse) protein is Angiopoietin-related protein 1 (Angptl1).